Consider the following 223-residue polypeptide: Adenylate kinase (223 aa).

10 to 15 (GSGKGT) is an ATP binding site. The NMP stretch occupies residues 30 to 59 (ESGAIFREHIGGGTELGKQAKAFIERGDLV). Residues serine 31, arginine 36, 57–59 (DLV), 84–87 (GFPR), and glutamine 91 each bind AMP. Residues 125–164 (GRRLCKNDNNHPNNIFIDAIKPNGDVCRVCGGELSARSDD) are LID. Arginine 126 is an ATP binding site. AMP contacts are provided by arginine 161 and arginine 173. Glycine 209 is a binding site for ATP.

The protein belongs to the adenylate kinase family. Monomer.

The protein resides in the cytoplasm. It carries out the reaction AMP + ATP = 2 ADP. It functions in the pathway purine metabolism; AMP biosynthesis via salvage pathway; AMP from ADP: step 1/1. In terms of biological role, catalyzes the reversible transfer of the terminal phosphate group between ATP and AMP. Plays an important role in cellular energy homeostasis and in adenine nucleotide metabolism. The sequence is that of Adenylate kinase from Nitratidesulfovibrio vulgaris (strain ATCC 29579 / DSM 644 / CCUG 34227 / NCIMB 8303 / VKM B-1760 / Hildenborough) (Desulfovibrio vulgaris).